The chain runs to 221 residues: PKHD-type hydroxylase Pro_1271 (221 aa).

Residues 80–174 (KVHGVMFSKS…RIVCVGWIQS (95 aa)) form the Fe2OG dioxygenase domain. Residues His98, Asp100, and His155 each contribute to the Fe cation site. Arg165 lines the 2-oxoglutarate pocket.

The cofactor is Fe(2+). L-ascorbate serves as cofactor.

This Prochlorococcus marinus (strain SARG / CCMP1375 / SS120) protein is PKHD-type hydroxylase Pro_1271.